The primary structure comprises 336 residues: Ornithine carbamoyltransferase, catabolic (336 aa).

Carbamoyl phosphate is bound by residues 62–65, glutamine 89, arginine 113, and 140–143; these read STRT and HPTQ. Residues asparagine 172, aspartate 236, and 240 to 241 contribute to the L-ornithine site; that span reads SM. Carbamoyl phosphate is bound by residues 277–278 and arginine 322; that span reads CL.

Belongs to the aspartate/ornithine carbamoyltransferase superfamily. OTCase family.

It is found in the cytoplasm. The enzyme catalyses carbamoyl phosphate + L-ornithine = L-citrulline + phosphate + H(+). It participates in amino-acid degradation; L-arginine degradation via ADI pathway; carbamoyl phosphate from L-arginine: step 2/2. Its function is as follows. Reversibly catalyzes the transfer of the carbamoyl group from carbamoyl phosphate (CP) to the N(epsilon) atom of ornithine (ORN) to produce L-citrulline. This is Ornithine carbamoyltransferase, catabolic from Staphylococcus aureus (strain MSSA476).